The following is a 267-amino-acid chain: Levodione reductase (267 aa).

An NAD(+)-binding site is contributed by 17–42; the sequence is LITGGGSGLGRATAVRLAAEGAKLSL. S152 is a substrate binding site. The active-site Proton acceptor is Y165.

This sequence belongs to the short-chain dehydrogenases/reductases (SDR) family.

The catalysed reaction is (4R)-hydroxy-(6R)-2,2,6-trimethylcyclohexanone + NAD(+) = (6R)-2,2,6-trimethyl-1,4-cyclohexanedione + NADH + H(+). Its activity is regulated as follows. Strongly activated by monovalent cations, such as K(+), Na(+), and NH4(+). Its function is as follows. Catalyzes the regio- and stereoselective reversible NAD-dependent reduction of (6R)-2,2,6-trimethyl-1,4-cyclohexanedione (levodione) to (4R,6R)-4-hydroxy-2,2,6-trimethylcyclohexanone (actinol). This chain is Levodione reductase (lvr), found in Leifsonia aquatica (Corynebacterium aquaticum).